The chain runs to 211 residues: Transcription antitermination protein NusB (211 aa).

Belongs to the NusB family.

Functionally, involved in transcription antitermination. Required for transcription of ribosomal RNA (rRNA) genes. Binds specifically to the boxA antiterminator sequence of the ribosomal RNA (rrn) operons. This is Transcription antitermination protein NusB from Trichormus variabilis (strain ATCC 29413 / PCC 7937) (Anabaena variabilis).